Here is a 614-residue protein sequence, read N- to C-terminus: Translation initiation factor IF-2 (614 aa).

One can recognise a tr-type G domain in the interval 115 to 283 (ARAPIVTIMG…ILLIAELNDY (169 aa)). The interval 124–131 (GHVDHGKT) is G1. 124-131 (GHVDHGKT) serves as a coordination point for GTP. The interval 149-153 (GITQH) is G2. The segment at 170-173 (DTPG) is G3. GTP-binding positions include 170 to 174 (DTPGH) and 224 to 227 (NKMD). The interval 224 to 227 (NKMD) is G4. The segment at 260-262 (SAL) is G5.

The protein belongs to the TRAFAC class translation factor GTPase superfamily. Classic translation factor GTPase family. IF-2 subfamily.

It is found in the cytoplasm. Its function is as follows. One of the essential components for the initiation of protein synthesis. Protects formylmethionyl-tRNA from spontaneous hydrolysis and promotes its binding to the 30S ribosomal subunits. Also involved in the hydrolysis of GTP during the formation of the 70S ribosomal complex. This is Translation initiation factor IF-2 from Ureaplasma urealyticum serovar 10 (strain ATCC 33699 / Western).